Reading from the N-terminus, the 880-residue chain is Valine--tRNA ligase (880 aa).

The 'HIGH' region signature appears at Pro-49 to His-59. Positions Lys-525–Ser-529 match the 'KMSKS' region motif. Lys-528 contributes to the ATP binding site. The stretch at Leu-809–Arg-880 forms a coiled coil.

The protein belongs to the class-I aminoacyl-tRNA synthetase family. ValS type 1 subfamily. In terms of assembly, monomer.

Its subcellular location is the cytoplasm. It catalyses the reaction tRNA(Val) + L-valine + ATP = L-valyl-tRNA(Val) + AMP + diphosphate. Functionally, catalyzes the attachment of valine to tRNA(Val). As ValRS can inadvertently accommodate and process structurally similar amino acids such as threonine, to avoid such errors, it has a 'posttransfer' editing activity that hydrolyzes mischarged Thr-tRNA(Val) in a tRNA-dependent manner. The polypeptide is Valine--tRNA ligase (valS) (Geobacillus stearothermophilus (Bacillus stearothermophilus)).